A 385-amino-acid polypeptide reads, in one-letter code: Mitochondrial protein C2orf69 (385 aa).

The transit peptide at 1–24 (MWGFRLLRSPPLLLLLPQLGIGNA) directs the protein to the mitochondrion.

It belongs to the C2orf69 family.

The protein localises to the mitochondrion matrix. May play a role in the respiratory chain. The protein is Mitochondrial protein C2orf69 (C2orf69) of Homo sapiens (Human).